The following is a 505-amino-acid chain: Probable RNA exonuclease NGL3 (505 aa).

Disordered regions lie at residues 1 to 75 (MDSQ…FPTP) and 334 to 369 (RNGEESDQDDEECDEKSRGEGHSDQPQNPKPESFTA). The span at 10–23 (SPSQKESSSTSGLV) shows a compositional bias: polar residues. Residues 36–54 (HRDQLSVDQIKKIREERAQ) are compositionally biased toward basic and acidic residues. Residue serine 62 is modified to Phosphoserine. Residues 338–347 (ESDQDDEECD) are compositionally biased toward acidic residues.

This sequence belongs to the CCR4/nocturin family.

The chain is Probable RNA exonuclease NGL3 (NGL3) from Saccharomyces cerevisiae (strain ATCC 204508 / S288c) (Baker's yeast).